The primary structure comprises 454 residues: ABSCISIC ACID-INSENSITIVE 5-like protein 6 (454 aa).

3 positions are modified to phosphoserine: Ser32, Ser55, and Ser126. A Phosphothreonine modification is found at Thr169. Positions 372-435 (IERRQKRMIK…KNQLLEPLRQ (64 aa)) constitute a bZIP domain. The interval 374 to 393 (RRQKRMIKNRESAARSRARK) is basic motif. The segment at 400 to 414 (LEAEIAQLKELNEEL) is leucine-zipper.

It belongs to the bZIP family. ABI5 subfamily. In terms of assembly, DNA-binding heterodimer. Interacts with ABI3 and the AFP proteins AFP1, AFP2, AFP3 and AFP4. As to expression, expressed in roots and flowers.

The protein localises to the nucleus. Functionally, binds to the ABA-responsive element (ABRE). Mediates stress-responsive ABA signaling. In Arabidopsis thaliana (Mouse-ear cress), this protein is ABSCISIC ACID-INSENSITIVE 5-like protein 6 (ABF3).